Consider the following 351-residue polypeptide: N-acetyl-gamma-glutamyl-phosphate reductase (351 aa).

The active site involves Cys-154.

It belongs to the NAGSA dehydrogenase family. Type 1 subfamily.

It is found in the cytoplasm. It carries out the reaction N-acetyl-L-glutamate 5-semialdehyde + phosphate + NADP(+) = N-acetyl-L-glutamyl 5-phosphate + NADPH + H(+). Its pathway is amino-acid biosynthesis; L-arginine biosynthesis; N(2)-acetyl-L-ornithine from L-glutamate: step 3/4. In terms of biological role, catalyzes the NADPH-dependent reduction of N-acetyl-5-glutamyl phosphate to yield N-acetyl-L-glutamate 5-semialdehyde. The sequence is that of N-acetyl-gamma-glutamyl-phosphate reductase from Prochlorococcus marinus (strain AS9601).